Consider the following 96-residue polypeptide: Aspartyl/glutamyl-tRNA(Asn/Gln) amidotransferase subunit C (96 aa).

Belongs to the GatC family. As to quaternary structure, heterotrimer of A, B and C subunits.

It carries out the reaction L-glutamyl-tRNA(Gln) + L-glutamine + ATP + H2O = L-glutaminyl-tRNA(Gln) + L-glutamate + ADP + phosphate + H(+). The catalysed reaction is L-aspartyl-tRNA(Asn) + L-glutamine + ATP + H2O = L-asparaginyl-tRNA(Asn) + L-glutamate + ADP + phosphate + 2 H(+). Its function is as follows. Allows the formation of correctly charged Asn-tRNA(Asn) or Gln-tRNA(Gln) through the transamidation of misacylated Asp-tRNA(Asn) or Glu-tRNA(Gln) in organisms which lack either or both of asparaginyl-tRNA or glutaminyl-tRNA synthetases. The reaction takes place in the presence of glutamine and ATP through an activated phospho-Asp-tRNA(Asn) or phospho-Glu-tRNA(Gln). This Sulfurovum sp. (strain NBC37-1) protein is Aspartyl/glutamyl-tRNA(Asn/Gln) amidotransferase subunit C.